The following is a 325-amino-acid chain: UPF0164 protein TP_0856 (325 aa).

Residues 1–28 form the signal peptide; sequence MVHYKSVFYKSAALVCGFVLAGASVAIA.

This sequence belongs to the UPF0164 family.

This chain is UPF0164 protein TP_0856, found in Treponema pallidum (strain Nichols).